A 501-amino-acid polypeptide reads, in one-letter code: COP9 signalosome complex subunit 3 (501 aa).

The 171-residue stretch at 275-445 folds into the PCI domain; it reads RFEDALFLLE…VFWTELSPVP (171 aa).

Belongs to the CSN3 family. Component of the CSN complex, probably composed of csn-1, csn-2, csn-3, csn-4, csn-5, csn-6 and csn-7. Within the complex it probably interacts directly with csn-2 and csn-4. May interact with itself.

Its subcellular location is the cytoplasm. The protein resides in the nucleus. Its function is as follows. Component of the COP9 signalosome complex (CSN), a complex involved in various cellular and developmental processes. The CSN complex is an essential regulator of the ubiquitin (Ubl) conjugation pathway by mediating the deneddylation of the cullin subunits of the SCF-type E3 ligase complexes, leading to decrease the Ubl ligase activity of SCF. The CSN complex plays an essential role in embryogenesis and oogenesis and is required to regulate microtubule stability in the early embryo. Mediates mei-3/katanin targeting for degradation at the meiosis to mitosis transition via deneddylation of cul-3. The sequence is that of COP9 signalosome complex subunit 3 (csn-3) from Caenorhabditis elegans.